Reading from the N-terminus, the 201-residue chain is Orotate phosphoribosyltransferase (201 aa).

5-phospho-alpha-D-ribose 1-diphosphate contacts are provided by residues Lys-90 and 113–121 (EDIITTGGS). Residues Thr-117 and Arg-145 each contribute to the orotate site.

The protein belongs to the purine/pyrimidine phosphoribosyltransferase family. PyrE subfamily. In terms of assembly, homodimer. Requires Mg(2+) as cofactor.

It carries out the reaction orotidine 5'-phosphate + diphosphate = orotate + 5-phospho-alpha-D-ribose 1-diphosphate. The protein operates within pyrimidine metabolism; UMP biosynthesis via de novo pathway; UMP from orotate: step 1/2. In terms of biological role, catalyzes the transfer of a ribosyl phosphate group from 5-phosphoribose 1-diphosphate to orotate, leading to the formation of orotidine monophosphate (OMP). The sequence is that of Orotate phosphoribosyltransferase from Sulfurovum sp. (strain NBC37-1).